Reading from the N-terminus, the 77-residue chain is uncharacterized protein (77 aa).

2 stretches are compositionally biased toward basic and acidic residues: residues C1–R24 and E37–P58. A disordered region spans residues C1–K77. The segment covering R66 to K77 has biased composition (basic residues).

This is an uncharacterized protein from Macaca fascicularis (Crab-eating macaque).